Consider the following 151-residue polypeptide: Transcriptional regulator MraZ (151 aa).

2 SpoVT-AbrB domains span residues 5–51 (AHEL…PVAE) and 81–124 (AEIL…GREQ).

This sequence belongs to the MraZ family. Forms oligomers.

The protein localises to the cytoplasm. It is found in the nucleoid. This is Transcriptional regulator MraZ from Neisseria gonorrhoeae (strain ATCC 700825 / FA 1090).